A 346-amino-acid chain; its full sequence is S-adenosylmethionine:tRNA ribosyltransferase-isomerase (346 aa).

It belongs to the QueA family. As to quaternary structure, monomer.

It localises to the cytoplasm. It carries out the reaction 7-aminomethyl-7-carbaguanosine(34) in tRNA + S-adenosyl-L-methionine = epoxyqueuosine(34) in tRNA + adenine + L-methionine + 2 H(+). The protein operates within tRNA modification; tRNA-queuosine biosynthesis. Its function is as follows. Transfers and isomerizes the ribose moiety from AdoMet to the 7-aminomethyl group of 7-deazaguanine (preQ1-tRNA) to give epoxyqueuosine (oQ-tRNA). In Nitrosomonas eutropha (strain DSM 101675 / C91 / Nm57), this protein is S-adenosylmethionine:tRNA ribosyltransferase-isomerase.